The chain runs to 540 residues: Raucaffricine-O-beta-D-glucosidase (540 aa).

A beta-D-glucoside is bound by residues glutamine 36, histidine 140, and 185–186 (NE). Glutamate 186 (proton donor) is an active-site residue. A disulfide bridge links cysteine 221 with cysteine 230. Residues tyrosine 347, glutamate 420, tryptophan 469, 476-477 (EW), and phenylalanine 485 each bind a beta-D-glucoside. The active-site Nucleophile is the glutamate 420.

The protein belongs to the glycosyl hydrolase 1 family.

The enzyme catalyses raucaffricine + H2O = vomilenine + D-glucose. It carries out the reaction vomilenine + UDP-alpha-D-glucose = raucaffricine + UDP + H(+). In terms of biological role, glucosidase specifically involved in alkaloid biosynthesis leading to the accumulation of several alkaloids, including ajmaline, an important plant-derived pharmaceutical used in the treatment of heart disorders. The chain is Raucaffricine-O-beta-D-glucosidase from Rauvolfia serpentina (Serpentine wood).